The sequence spans 146 residues: Transcriptional regulator MraZ (146 aa).

SpoVT-AbrB domains are found at residues 5–47 (EYYH…TITD) and 76–119 (SIQV…AKEK).

It belongs to the MraZ family. Forms oligomers.

It localises to the cytoplasm. It is found in the nucleoid. In Dictyoglomus thermophilum (strain ATCC 35947 / DSM 3960 / H-6-12), this protein is Transcriptional regulator MraZ.